We begin with the raw amino-acid sequence, 297 residues long: MSGSYQHLSNVGSRVMKRLGNRPKNFLPHSEKFIKKSTPEFMKSDLKEVDEKTSFKSEKEWKFIPGDRVVVMSGASKGNIAVIKSFDKRTNSFILDENGPTKTVPVPKQFWLEGQTSHMITIPVSILGKDLRLVADIDDEKTPGKTRTVAVRDVSFNGSYYDADYKKVMPYRCVKGQPDLIIPWPKPDPIDVQTNLATDPVIAREQTFWVDSVVRNPIPKKAIPSIRNPHSKYKRGTLTAKDIAKLVAPEMPLTEVRKSHLAEKKELAEREVPKLTEEDMEAIGARVFEFLEKQKRE.

The residue at position 2 (S2) is an N-acetylserine. The 34-residue stretch at 63–96 (FIPGDRVVVMSGASKGNIAVIKSFDKRTNSFILD) folds into the KOW domain.

It belongs to the universal ribosomal protein uL24 family. In terms of assembly, component of the mitochondrial large ribosomal subunit (mt-LSU). Mature yeast 74S mitochondrial ribosomes consist of a small (37S) and a large (54S) subunit. The 37S small subunit contains a 15S ribosomal RNA (15S mt-rRNA) and 34 different proteins. The 54S large subunit contains a 21S rRNA (21S mt-rRNA) and 46 different proteins. uL24m forms the wall of the exit tunnel.

The protein resides in the mitochondrion. Functionally, component of the mitochondrial ribosome (mitoribosome), a dedicated translation machinery responsible for the synthesis of mitochondrial genome-encoded proteins, including at least some of the essential transmembrane subunits of the mitochondrial respiratory chain. The mitoribosomes are attached to the mitochondrial inner membrane and translation products are cotranslationally integrated into the membrane. This is Large ribosomal subunit protein uL24m (MRPL40) from Saccharomyces cerevisiae (strain ATCC 204508 / S288c) (Baker's yeast).